The sequence spans 413 residues: Cell surface GPI-anchored protein ECM33 (413 aa).

Residues 1–20 form the signal peptide; it reads MQIKSFLLPIVAALLTSVSA. N-linked (GlcNAc...) asparagine glycans are attached at residues asparagine 93, asparagine 102, asparagine 172, asparagine 209, asparagine 222, asparagine 227, asparagine 279, asparagine 290, asparagine 306, asparagine 322, and asparagine 382. The tract at residues 347–390 is disordered; that stretch reads YVCTHPANPSSSSKSGSSTQTGKSDSKSSDGSSSSNSSSSSKKG. The segment covering 356 to 390 has biased composition (low complexity); it reads SSSSKSGSSTQTGKSDSKSSDGSSSSNSSSSSKKG. A lipid anchor (GPI-anchor amidated glycine) is attached at glycine 390. Residues 391–413 constitute a propeptide, removed in mature form; sequence ASNVLVVPGMVLTTALGVLLALI.

Belongs to the SPS2 family.

It localises to the cell membrane. The protein resides in the secreted. It is found in the cell wall. Cell surface protein required for proper cell wall integrity and for the correct assembly of the mannoprotein outer layer of the cell wall. This Candida albicans (strain SC5314 / ATCC MYA-2876) (Yeast) protein is Cell surface GPI-anchored protein ECM33 (ECM331).